The chain runs to 238 residues: Testis-specific gene A8 protein (238 aa).

Residues 35-238 (GKGAKTNKRG…GEAVATTTMT (204 aa)) are disordered. Residues 39–48 (KTNKRGKRGG) show a composition bias toward basic residues. A run of 8 repeats spans residues 79–93 (AAAA…PESS), 94–108 (AAAA…PESS), 109–123 (AAAA…PESS), 124–138 (AAAA…LESS), 153–158 (PAAPEA), 171–176 (PAAPEA), 180–185 (PAAPEA), and 189–194 (PAAPEA). Positions 79–148 (AAAAAPEAAA…AAAAAPEAAA (70 aa)) are 4 X 15 AA tandem repeats of A-A-A-A-A-P-E-A-A-A-S-[PL]-E-S-S. 2 stretches are compositionally biased toward low complexity: residues 79–200 (AAAA…AAPA) and 208–220 (WEAA…AAVK). Residues 153 to 194 (PAAPEAAAAPEVAAAPATPAAPEATAAPAAPEAATTPAAPEA) form a 4 X 6 AA repeats of P-A-A-P-E-A region.

Specifically expressed in testis (at protein level).

The protein resides in the cytoplasm. It localises to the nucleus. It is found in the nucleoplasm. The protein is Testis-specific gene A8 protein of Mus musculus (Mouse).